Reading from the N-terminus, the 63-residue chain is Large ribosomal subunit protein bL28 (63 aa).

The protein belongs to the bacterial ribosomal protein bL28 family.

The chain is Large ribosomal subunit protein bL28 from Clostridium botulinum (strain ATCC 19397 / Type A).